Here is a 151-residue protein sequence, read N- to C-terminus: Large ribosomal subunit protein bL9 (151 aa).

It belongs to the bacterial ribosomal protein bL9 family.

Functionally, binds to the 23S rRNA. The sequence is that of Large ribosomal subunit protein bL9 from Prochlorococcus marinus (strain MIT 9215).